The primary structure comprises 280 residues: 4-hydroxy-3-methylbut-2-enyl diphosphate reductase (280 aa).

Cys12 contacts [4Fe-4S] cluster. 2 residues coordinate (2E)-4-hydroxy-3-methylbut-2-enyl diphosphate: His40 and His72. Dimethylallyl diphosphate-binding residues include His40 and His72. Residues His40 and His72 each contribute to the isopentenyl diphosphate site. Cys94 serves as a coordination point for [4Fe-4S] cluster. His122 is a binding site for (2E)-4-hydroxy-3-methylbut-2-enyl diphosphate. His122 lines the dimethylallyl diphosphate pocket. An isopentenyl diphosphate-binding site is contributed by His122. The active-site Proton donor is the Glu124. Thr160 contacts (2E)-4-hydroxy-3-methylbut-2-enyl diphosphate. Cys188 provides a ligand contact to [4Fe-4S] cluster. The (2E)-4-hydroxy-3-methylbut-2-enyl diphosphate site is built by Ser216, Asn218, and Ser260. Residues Ser216, Asn218, and Ser260 each coordinate dimethylallyl diphosphate. Isopentenyl diphosphate-binding residues include Ser216, Asn218, and Ser260.

It belongs to the IspH family. Requires [4Fe-4S] cluster as cofactor.

The catalysed reaction is isopentenyl diphosphate + 2 oxidized [2Fe-2S]-[ferredoxin] + H2O = (2E)-4-hydroxy-3-methylbut-2-enyl diphosphate + 2 reduced [2Fe-2S]-[ferredoxin] + 2 H(+). The enzyme catalyses dimethylallyl diphosphate + 2 oxidized [2Fe-2S]-[ferredoxin] + H2O = (2E)-4-hydroxy-3-methylbut-2-enyl diphosphate + 2 reduced [2Fe-2S]-[ferredoxin] + 2 H(+). It participates in isoprenoid biosynthesis; dimethylallyl diphosphate biosynthesis; dimethylallyl diphosphate from (2E)-4-hydroxy-3-methylbutenyl diphosphate: step 1/1. It functions in the pathway isoprenoid biosynthesis; isopentenyl diphosphate biosynthesis via DXP pathway; isopentenyl diphosphate from 1-deoxy-D-xylulose 5-phosphate: step 6/6. In terms of biological role, catalyzes the conversion of 1-hydroxy-2-methyl-2-(E)-butenyl 4-diphosphate (HMBPP) into a mixture of isopentenyl diphosphate (IPP) and dimethylallyl diphosphate (DMAPP). Acts in the terminal step of the DOXP/MEP pathway for isoprenoid precursor biosynthesis. This Trichlorobacter lovleyi (strain ATCC BAA-1151 / DSM 17278 / SZ) (Geobacter lovleyi) protein is 4-hydroxy-3-methylbut-2-enyl diphosphate reductase.